Reading from the N-terminus, the 375-residue chain is AT-rich binding protein (375 aa).

The segment at 29–52 adopts a C2H2-type 1 zinc-finger fold; it reads IVCHTCQEELQTQDQFWKHIQDEH. The segment covering 110–119 has biased composition (basic and acidic residues); the sequence is DDQREMDIHE. Positions 110–142 are disordered; sequence DDQREMDIHEAQQQQHQQQQQHQQQQQLQQQQQ. Residues 121–142 are compositionally biased toward low complexity; it reads QQQQHQQQQQHQQQQQLQQQQQ. C2H2-type zinc fingers lie at residues 308 to 332 and 338 to 361; these read YICD…RVVH and FNCE…KKKH.

Its subcellular location is the nucleus. Functionally, may be a transcription factor for genes having (A+T) stretches in their promoter and/or enhancer regions. Binds to AT rich DNA. The protein is AT-rich binding protein of Drosophila pseudoobscura pseudoobscura (Fruit fly).